Here is a 261-residue protein sequence, read N- to C-terminus: Bcl-2-binding component 3, isoforms 3/4 (261 aa).

The segment at 27–261 is disordered; sequence QICGPRERHG…ASAGDFLCTM (235 aa). Low complexity predominate over residues 40 to 50; sequence PGGQLPGARRG. Residues 53-63 are compositionally biased toward pro residues; sequence PRRPAPLPARP. Residues 64–73 are compositionally biased toward low complexity; that stretch reads PGALGSVLRP. 2 stretches are compositionally biased toward basic residues: residues 74 to 87 and 95 to 106; these read LRAR…RPHP and RPHRPTRRHRRP. Low complexity predominate over residues 124 to 146; the sequence is PGRSSALALAGGAAPGVARAQRP. Gly residues predominate over residues 147–171; the sequence is GGSGGRSHPGGPGSPRGGGTVGPGD. Residues 172–197 are compositionally biased toward low complexity; the sequence is RGPAAADGGRPQRTVRAAETRGAAAA.

Does not interact with BCL2.

In terms of biological role, does not affect cell growth. The protein is Bcl-2-binding component 3, isoforms 3/4 (BBC3) of Homo sapiens (Human).